Consider the following 72-residue polypeptide: Protein CYSTEINE-RICH TRANSMEMBRANE MODULE 1 (72 aa).

Over residues 1–11 (MSQYDHNQSAG) the composition is skewed to polar residues. The segment at 1–46 (MSQYDHNQSAGANPPPPMSTCTSPPPPIGYPTNQPSHGSVAQGKVE) is disordered. Positions 13-29 (NPPPPMSTCTSPPPPIG) are enriched in pro residues. Residues 49–65 (SKGDGFFKGCLAAMCCC) traverse the membrane as a helical segment.

The protein belongs to the CYSTM1 family. Heterodimers. Binds weakly to CYSTM7 and WIH1/CYSTM13. In terms of tissue distribution, mostly expressed in roots, flowers and siliques and, to a lower extent, in stems and leaves.

Its subcellular location is the cell membrane. It localises to the nucleus. Functionally, may be involved in aluminium (Al) tolerance. Involved in resistance to abiotic stress. The polypeptide is Protein CYSTEINE-RICH TRANSMEMBRANE MODULE 1 (Arabidopsis thaliana (Mouse-ear cress)).